The primary structure comprises 452 residues: MQIVEKSGEGLSRVFGVTVPASELATRLEARIAEVAPQMNVKGFRPGKVPTAHVRRLYGKALMGEVIEQALNETTTKVLEDNKLRPAGQPELNPSSDMDKVIAGGEDLSFDLAVEVMPEFEPIDPTSIELVKPVYKVSDEEVQEALDELAKQARTYEPRTGKSLKAKDGDQLLIDFVGTIDGVEFAGGKAEGAELVLGSGQFIPGFEDQLVGAKPGDDVVVKVKFPEEYQAKDLAGKDAEFATKVQEVRAPVDGKADDELAKRLGLSDLAALTELLKSNLAGRYDNSSRFKLKRALLDVLDTKHDFPLPPRMVDAEFAGIWQQVEADKARGGLPPEDAEKTEDQLKDEYKKIAERRVRLGLVLAEIGRKNDVVVTDQELTDAIMREARQYGAQAQQVFDMYRQRADLQAALRAPIYEDKVVDLIFGKAKIEEKEVSKDELLEEDDLPEGYGG.

Residues 169 to 254 (GDQLLIDFVG…VQEVRAPVDG (86 aa)) form the PPIase FKBP-type domain.

This sequence belongs to the FKBP-type PPIase family. Tig subfamily.

It localises to the cytoplasm. The enzyme catalyses [protein]-peptidylproline (omega=180) = [protein]-peptidylproline (omega=0). In terms of biological role, involved in protein export. Acts as a chaperone by maintaining the newly synthesized protein in an open conformation. Functions as a peptidyl-prolyl cis-trans isomerase. This chain is Trigger factor (tig), found in Caulobacter vibrioides (strain ATCC 19089 / CIP 103742 / CB 15) (Caulobacter crescentus).